Consider the following 230-residue polypeptide: Enolase-phosphatase E1 (230 aa).

This sequence belongs to the HAD-like hydrolase superfamily. MasA/MtnC family. Monomer. The cofactor is Mg(2+).

It catalyses the reaction 5-methylsulfanyl-2,3-dioxopentyl phosphate + H2O = 1,2-dihydroxy-5-(methylsulfanyl)pent-1-en-3-one + phosphate. It participates in amino-acid biosynthesis; L-methionine biosynthesis via salvage pathway; L-methionine from S-methyl-5-thio-alpha-D-ribose 1-phosphate: step 3/6. Its pathway is amino-acid biosynthesis; L-methionine biosynthesis via salvage pathway; L-methionine from S-methyl-5-thio-alpha-D-ribose 1-phosphate: step 4/6. Its function is as follows. Bifunctional enzyme that catalyzes the enolization of 2,3-diketo-5-methylthiopentyl-1-phosphate (DK-MTP-1-P) into the intermediate 2-hydroxy-3-keto-5-methylthiopentenyl-1-phosphate (HK-MTPenyl-1-P), which is then dephosphorylated to form the acireductone 1,2-dihydroxy-3-keto-5-methylthiopentene (DHK-MTPene). This Marinobacter nauticus (strain ATCC 700491 / DSM 11845 / VT8) (Marinobacter aquaeolei) protein is Enolase-phosphatase E1.